The chain runs to 347 residues: Selenide, water dikinase (347 aa).

Cysteine 17 is an active-site residue. ATP contacts are provided by residues lysine 20 and 48–50 (TRD). Residue aspartate 51 participates in Mg(2+) binding. ATP contacts are provided by residues aspartate 68, aspartate 91, and 139–141 (GHS). Aspartate 91 contacts Mg(2+). A Mg(2+)-binding site is contributed by aspartate 227.

Belongs to the selenophosphate synthase 1 family. Class I subfamily. In terms of assembly, homodimer. Mg(2+) is required as a cofactor.

It carries out the reaction hydrogenselenide + ATP + H2O = selenophosphate + AMP + phosphate + 2 H(+). Functionally, synthesizes selenophosphate from selenide and ATP. The chain is Selenide, water dikinase from Enterobacter sp. (strain 638).